The chain runs to 225 residues: MNNWTEALGEEKQQPYFQHILQQVHQERMNGVTVFPPQKEVFSAFALTEFKDVKVVILGQDPYHGPNQAHGLAFSVKPPVAPPPSLVNMYKELAQDVEGFQIPNHGYLVDWAKQGVLLLNTVLTVRQGQAHSHANFGWEIFTDKVIAQLNQHRENLVFLLWGSHAQKKGQFIDRSRHCVLTAPHPSPLSAYRGFFGCKHFSKTNRYLLSKGIAPINWQLRLEIDY.

Asp-61 serves as the catalytic Proton acceptor.

It belongs to the uracil-DNA glycosylase (UDG) superfamily. UNG family.

It is found in the cytoplasm. The enzyme catalyses Hydrolyzes single-stranded DNA or mismatched double-stranded DNA and polynucleotides, releasing free uracil.. Functionally, excises uracil residues from the DNA which can arise as a result of misincorporation of dUMP residues by DNA polymerase or due to deamination of cytosine. The chain is Uracil-DNA glycosylase from Actinobacillus pleuropneumoniae serotype 5b (strain L20).